A 307-amino-acid chain; its full sequence is Tyrosine recombinase XerC (307 aa).

Residues 9–95 form the Core-binding (CB) domain; sequence ETLSLAIDSF…ALRSFLDWQV (87 aa). The 181-residue stretch at 116–296 folds into the Tyr recombinase domain; sequence HLPKNMDVDE…DFQHLAKVYD (181 aa). Catalysis depends on residues R155, K179, H248, R251, and H274. Y283 functions as the O-(3'-phospho-DNA)-tyrosine intermediate in the catalytic mechanism.

Belongs to the 'phage' integrase family. XerC subfamily. As to quaternary structure, forms a cyclic heterotetrameric complex composed of two molecules of XerC and two molecules of XerD, in which XerC interacts with XerD via its C-terminal region, XerD interacts with XerC via its C-terminal region and so on.

It is found in the cytoplasm. With respect to regulation, ftsK may regulate the catalytic switch between XerC and XerD in the heterotetrameric complex during the two steps of the recombination process. In terms of biological role, site-specific tyrosine recombinase, which acts by catalyzing the cutting and rejoining of the recombining DNA molecules. Binds cooperatively to specific DNA consensus sequences that are separated from XerD binding sites by a short central region, forming the heterotetrameric XerC-XerD complex that recombines DNA substrates. The complex is essential to convert dimers of the bacterial chromosome into monomers to permit their segregation at cell division. It also contributes to the segregational stability of plasmids. In the complex XerC specifically exchanges the top DNA strands. The protein is Tyrosine recombinase XerC of Proteus mirabilis.